The sequence spans 997 residues: Phosphoenolpyruvate carboxylase (997 aa).

The interval 1–67 (MKSSGSARTA…KPAARTREDK (67 aa)) is disordered. Active-site residues include His207 and Lys649.

Belongs to the PEPCase type 1 family. Requires Mg(2+) as cofactor.

The catalysed reaction is oxaloacetate + phosphate = phosphoenolpyruvate + hydrogencarbonate. Functionally, forms oxaloacetate, a four-carbon dicarboxylic acid source for the tricarboxylic acid cycle. The chain is Phosphoenolpyruvate carboxylase from Burkholderia vietnamiensis (strain G4 / LMG 22486) (Burkholderia cepacia (strain R1808)).